The sequence spans 562 residues: Arginine--tRNA ligase (562 aa).

The 'HIGH' region motif lies at 129 to 139 (ANPTGPLHVGH).

Belongs to the class-I aminoacyl-tRNA synthetase family. In terms of assembly, monomer.

The protein localises to the cytoplasm. The catalysed reaction is tRNA(Arg) + L-arginine + ATP = L-arginyl-tRNA(Arg) + AMP + diphosphate. The polypeptide is Arginine--tRNA ligase (Stenotrophomonas maltophilia (strain K279a)).